The chain runs to 469 residues: E3 ubiquitin-protein ligase TRAIP (469 aa).

The RING-type zinc-finger motif lies at 7–50 (CTICSDFFDHSRDVAAIHCGHTFHLQCLIQWFETAPSRTCPQCR). Coiled coils occupy residues 70–177 (EENV…QSQR) and 201–280 (CVSL…TLNL). The tract at residues 211-469 (LKEARKASGE…QAKLDTFLWS (259 aa)) is interaction with CYLD. Lys-304 is covalently cross-linked (Glycyl lysine isopeptide (Lys-Gly) (interchain with G-Cter in SUMO2)). Positions 460 to 469 (QAKLDTFLWS) match the PIP-box motif.

This sequence belongs to the TRAIP family. As to quaternary structure, interacts (via PIP-box) with PCNA. Binds TRAF1, TRAF2, TRAF3, TRAF5 and TRAF6 is part of the receptor-TRAF signaling complex. May interact with CYLD; the C-terminus interacts with CYLD, however the interaction was not detected with the full-length protein. Interacts with POLK and POLN. Interacts with UIMC1. Sumoylated; sumoylation is required for nuclear localization. Sumoylation increases protein stability, possibly by preventing ubiquitination. In terms of processing, autoubiquitinated.

The protein resides in the nucleus. The protein localises to the nucleoplasm. Its subcellular location is the nucleolus. It is found in the chromosome. It localises to the cytoplasm. The protein resides in the perinuclear region. It carries out the reaction S-ubiquitinyl-[E2 ubiquitin-conjugating enzyme]-L-cysteine + [acceptor protein]-L-lysine = [E2 ubiquitin-conjugating enzyme]-L-cysteine + N(6)-ubiquitinyl-[acceptor protein]-L-lysine.. It participates in protein modification; protein ubiquitination. In terms of biological role, E3 ubiquitin ligase required to protect genome stability in response to replication stress. Acts as a key regulator of interstrand cross-link repair, which takes place when both strands of duplex DNA are covalently tethered together, thereby blocking replication and transcription. Controls the choice between the two pathways of replication-coupled interstrand-cross-link repair by mediating ubiquitination of MCM7 subunit of the CMG helicase complex. Short ubiquitin chains on MCM7 promote recruitment of DNA glycosylase NEIL3. If the interstrand cross-link cannot be cleaved by NEIL3, the ubiquitin chains continue to grow on MCM7, promoting the unloading of the CMG helicase complex by the VCP/p97 ATPase, enabling the Fanconi anemia DNA repair pathway. Only catalyzes ubiquitination of MCM7 when forks converge. Also involved in the repair of covalent DNA-protein cross-links (DPCs) during DNA synthesis: promotes ubiquitination of DPCs, leading to their degradation by the proteasome. Has also been proposed to play a role in promoting translesion synthesis by mediating the assembly of 'Lys-63'-linked poly-ubiquitin chains on the Y-family polymerase POLN in order to facilitate bypass of DNA lesions and preserve genomic integrity. The function in translesion synthesis is however controversial. Acts as a regulator of the spindle assembly checkpoint. Also acts as a negative regulator of innate immune signaling by inhibiting activation of NF-kappa-B mediated by TNF. Negatively regulates TLR3/4- and RIG-I-mediated IRF3 activation and subsequent IFNB1 production and cellular antiviral response by promoting 'Lys-48'-linked polyubiquitination of TNK1 leading to its proteasomal degradation. The sequence is that of E3 ubiquitin-protein ligase TRAIP from Homo sapiens (Human).